We begin with the raw amino-acid sequence, 381 residues long: Protein-glutamate methylesterase/protein-glutamine glutaminase 1 (381 aa).

One can recognise a Response regulatory domain in the interval 14–132 (RVMLVDDSAV…DLAGGVDFKS (119 aa)). Asp-65 is modified (4-aspartylphosphate). Residues 143–173 (QARRAGARPARPGGPPATRPVIASTSPRTPV) are disordered. Over residues 144 to 153 (ARRAGARPAR) the composition is skewed to low complexity. Residues 188-381 (PEPPDIIAIG…PWIMKLAARR (194 aa)) enclose the CheB-type methylesterase domain. Active-site residues include Ser-199, His-227, and Asp-323.

Belongs to the CheB family. Phosphorylated by CheA. Phosphorylation of the N-terminal regulatory domain activates the methylesterase activity.

The protein resides in the cytoplasm. It carries out the reaction [protein]-L-glutamate 5-O-methyl ester + H2O = L-glutamyl-[protein] + methanol + H(+). The enzyme catalyses L-glutaminyl-[protein] + H2O = L-glutamyl-[protein] + NH4(+). Its function is as follows. Involved in chemotaxis. Part of a chemotaxis signal transduction system that modulates chemotaxis in response to various stimuli. Catalyzes the demethylation of specific methylglutamate residues introduced into the chemoreceptors (methyl-accepting chemotaxis proteins or MCP) by CheR. Also mediates the irreversible deamidation of specific glutamine residues to glutamic acid. In Paramagnetospirillum magneticum (strain ATCC 700264 / AMB-1) (Magnetospirillum magneticum), this protein is Protein-glutamate methylesterase/protein-glutamine glutaminase 1.